The following is a 124-amino-acid chain: Small ribosomal subunit protein uS13 (124 aa).

Residues 95-124 (GLPVRGQRTKTNARTRKGPKRTIAGKKKAR) are disordered.

The protein belongs to the universal ribosomal protein uS13 family. Part of the 30S ribosomal subunit. Forms a loose heterodimer with protein S19. Forms two bridges to the 50S subunit in the 70S ribosome.

Its function is as follows. Located at the top of the head of the 30S subunit, it contacts several helices of the 16S rRNA. In the 70S ribosome it contacts the 23S rRNA (bridge B1a) and protein L5 of the 50S subunit (bridge B1b), connecting the 2 subunits; these bridges are implicated in subunit movement. Contacts the tRNAs in the A and P-sites. The chain is Small ribosomal subunit protein uS13 from Mycobacterium avium (strain 104).